The sequence spans 278 residues: Alcohol dehydrogenase-related 31 kDa protein (278 aa).

11 to 34 (YVADCGGIALETSKVLMTKNIAKL) provides a ligand contact to NAD(+). Residue serine 139 participates in substrate binding. Residue tyrosine 152 is the Proton acceptor of the active site.

Belongs to the short-chain dehydrogenases/reductases (SDR) family.

This Drosophila persimilis (Fruit fly) protein is Alcohol dehydrogenase-related 31 kDa protein (Adhr).